A 519-amino-acid polypeptide reads, in one-letter code: ATP synthase subunit alpha 1 (519 aa).

172–179 (GDRQTGKT) provides a ligand contact to ATP.

The protein belongs to the ATPase alpha/beta chains family. F-type ATPases have 2 components, CF(1) - the catalytic core - and CF(0) - the membrane proton channel. CF(1) has five subunits: alpha(3), beta(3), gamma(1), delta(1), epsilon(1). CF(0) has three main subunits: a(1), b(2) and c(9-12). The alpha and beta chains form an alternating ring which encloses part of the gamma chain. CF(1) is attached to CF(0) by a central stalk formed by the gamma and epsilon chains, while a peripheral stalk is formed by the delta and b chains.

It localises to the cell inner membrane. It catalyses the reaction ATP + H2O + 4 H(+)(in) = ADP + phosphate + 5 H(+)(out). In terms of biological role, produces ATP from ADP in the presence of a proton gradient across the membrane. The alpha chain is a regulatory subunit. The chain is ATP synthase subunit alpha 1 from Psychromonas ingrahamii (strain DSM 17664 / CCUG 51855 / 37).